The primary structure comprises 338 residues: Adenylosuccinate synthetase (338 aa).

GTP is bound by residues 12–18 (GDEGKGK) and 42–44 (GHT). The active-site Proton acceptor is the Asp13. Residues Asp13 and Gly42 each coordinate Mg(2+). IMP contacts are provided by residues 13–16 (DEGK), 40–43 (NAGH), Thr127, Arg141, Gln179, Thr194, and Arg256. His43 (proton donor) is an active-site residue. 252-258 (TVTGRRR) lines the substrate pocket. GTP-binding positions include Arg258, 284-286 (CLD), and 324-326 (STG).

It belongs to the adenylosuccinate synthetase family. As to quaternary structure, homodimer. It depends on Mg(2+) as a cofactor.

The protein localises to the cytoplasm. The enzyme catalyses IMP + L-aspartate + GTP = N(6)-(1,2-dicarboxyethyl)-AMP + GDP + phosphate + 2 H(+). It participates in purine metabolism; AMP biosynthesis via de novo pathway; AMP from IMP: step 1/2. Functionally, plays an important role in the de novo pathway of purine nucleotide biosynthesis. Catalyzes the first committed step in the biosynthesis of AMP from IMP. This chain is Adenylosuccinate synthetase, found in Methanococcus maripaludis (strain C7 / ATCC BAA-1331).